Consider the following 360-residue polypeptide: Dihydroorotate dehydrogenase (quinone) (360 aa).

FMN-binding positions include 66–70 (AGFDK) and Thr-90. Lys-70 serves as a coordination point for substrate. 115 to 119 (NRMGF) lines the substrate pocket. Residues Asn-143 and Asn-176 each contribute to the FMN site. Substrate is bound at residue Asn-176. Ser-179 serves as the catalytic Nucleophile. Asn-181 contacts substrate. Residues Lys-212 and Thr-240 each contribute to the FMN site. 241 to 242 (NT) lines the substrate pocket. Residues Gly-264, Gly-293, and 314–315 (YT) contribute to the FMN site.

Belongs to the dihydroorotate dehydrogenase family. Type 2 subfamily. Monomer. FMN is required as a cofactor.

Its subcellular location is the cell membrane. The enzyme catalyses (S)-dihydroorotate + a quinone = orotate + a quinol. The protein operates within pyrimidine metabolism; UMP biosynthesis via de novo pathway; orotate from (S)-dihydroorotate (quinone route): step 1/1. In terms of biological role, catalyzes the conversion of dihydroorotate to orotate with quinone as electron acceptor. The sequence is that of Dihydroorotate dehydrogenase (quinone) from Mycobacterium ulcerans (strain Agy99).